Consider the following 108-residue polypeptide: uncharacterized protein (108 aa).

The disordered stretch occupies residues 56 to 108 (ELPSRGCLPAPRPESGQGRLSTGISQNGGRSSAQPCPRCIAGESGHFSHTKNH). The segment covering 73–89 (GRLSTGISQNGGRSSAQ) has biased composition (polar residues).

This is an uncharacterized protein from Homo sapiens (Human).